Reading from the N-terminus, the 374-residue chain is Chaperone protein DnaJ (374 aa).

Residues 5-70 form the J domain; it reads DFYEILGLGK…QKRDAYDRYG (66 aa). The tract at residues 28-47 is disordered; it reads LAMKHHPDRNPDSKGAEDKF. A compositionally biased stretch (basic and acidic residues) spans 35 to 47; sequence DRNPDSKGAEDKF. The CR-type zinc finger occupies 134–212; sequence GYDTTIRVPS…CSGAGKIKRN (79 aa). Zn(2+) is bound by residues C147, C150, C164, C167, C186, C189, C200, and C203. CXXCXGXG motif repeat units lie at residues 147–154, 164–171, 186–193, and 200–207; these read CETCDGSG, CTTCGGHG, CPKCHGSG, and CTACSGAG.

This sequence belongs to the DnaJ family. Homodimer. Zn(2+) serves as cofactor.

The protein localises to the cytoplasm. Participates actively in the response to hyperosmotic and heat shock by preventing the aggregation of stress-denatured proteins and by disaggregating proteins, also in an autonomous, DnaK-independent fashion. Unfolded proteins bind initially to DnaJ; upon interaction with the DnaJ-bound protein, DnaK hydrolyzes its bound ATP, resulting in the formation of a stable complex. GrpE releases ADP from DnaK; ATP binding to DnaK triggers the release of the substrate protein, thus completing the reaction cycle. Several rounds of ATP-dependent interactions between DnaJ, DnaK and GrpE are required for fully efficient folding. Also involved, together with DnaK and GrpE, in the DNA replication of plasmids through activation of initiation proteins. The chain is Chaperone protein DnaJ from Herminiimonas arsenicoxydans.